The following is a 356-amino-acid chain: Putative methylthioribose-1-phosphate isomerase (356 aa).

Substrate contacts are provided by residues 57 to 59 (RGA), Arg100, and Gln206. Asp247 (proton donor) is an active-site residue. Substrate is bound at residue 257 to 258 (NK).

It belongs to the eIF-2B alpha/beta/delta subunits family. MtnA subfamily.

It carries out the reaction 5-(methylsulfanyl)-alpha-D-ribose 1-phosphate = 5-(methylsulfanyl)-D-ribulose 1-phosphate. Its function is as follows. Catalyzes the interconversion of methylthioribose-1-phosphate (MTR-1-P) into methylthioribulose-1-phosphate (MTRu-1-P). In Pyrococcus abyssi (strain GE5 / Orsay), this protein is Putative methylthioribose-1-phosphate isomerase (aIF-2BI).